Consider the following 477-residue polypeptide: Inner membrane protein YbhI (477 aa).

Residues 1–5 (MNKKS) are Cytoplasmic-facing. Residues 6 to 26 (LWKLILILAIPCIIGFMPAPA) form a helical membrane-spanning segment. Position 27 (Gly-27) is a topological domain, periplasmic. The helical transmembrane segment at 28–48 (LSELAWVLFGIYLAAIVGLVI) threads the bilayer. Over 49–50 (KP) the chain is Cytoplasmic. The chain crosses the membrane as a helical span at residues 51 to 71 (FPEPVVLLIAVAASMVVVGNL). At 72-87 (SDGAFKTTAVLSGYSS) the chain is on the periplasmic side. A helical membrane pass occupies residues 88 to 108 (GTTWLVFSAFTLSAAFVTTGL). Residues 109 to 148 (GKRIAYLLIGKIGNTTLGLGYVTVFLDLVLAPATPSNTAR) are Cytoplasmic-facing. Residues 149 to 169 (AGGIVLPIINSVAVALGSEPE) traverse the membrane as a helical segment. At 170–219 (KSPRRVGHYLMMSIYMVTKTTSYMFFTAMAGNILALKMINDILHLQISWG) the chain is on the periplasmic side. A helical membrane pass occupies residues 220–240 (GWALAAGLPGIIMLLVTPLVI). Residues 241–272 (YTMYPPEIKKVDNKTIAKAGLAELGPMKIREK) lie on the Cytoplasmic side of the membrane. Residues 273–293 (MLLGVFVLALLGWIFSKSLGV) form a helical membrane-spanning segment. The Periplasmic portion of the chain corresponds to 294–297 (DEST). A helical transmembrane segment spans residues 298–318 (VAIVVMATMLLLGIVTWEDVV). At 319-356 (KNKGGWNTLIWYGGIIGLSSLLSKVKFFEWLAEVFKNN) the chain is on the cytoplasmic side. Residues 357 to 377 (LAFDGHGNVAFFVIIFLSIIV) form a helical membrane-spanning segment. Arg-378 is a topological domain (periplasmic). A helical transmembrane segment spans residues 379–399 (YFFASGSAYIVAMLPVFAMLA). Residues 400 to 445 (NVSGAPLMLTALALLFSNSYGGMVTHYGGAAGPVIFGVGYNDIKSW) are Cytoplasmic-facing. The chain crosses the membrane as a helical span at residues 446-466 (WLVGAVLTILTFLVHITLGVW). Over 467–477 (WWNMLIGWNML) the chain is Periplasmic.

Belongs to the SLC13A/DASS transporter (TC 2.A.47) family. DIT1 subfamily.

Its subcellular location is the cell inner membrane. The chain is Inner membrane protein YbhI (ybhI) from Escherichia coli (strain K12).